The primary structure comprises 225 residues: Cytidylate kinase (225 aa).

Glycine 12–threonine 20 contributes to the ATP binding site.

This sequence belongs to the cytidylate kinase family. Type 1 subfamily.

It is found in the cytoplasm. The catalysed reaction is CMP + ATP = CDP + ADP. It catalyses the reaction dCMP + ATP = dCDP + ADP. The protein is Cytidylate kinase of Vibrio cholerae serotype O1 (strain ATCC 39315 / El Tor Inaba N16961).